The chain runs to 403 residues: UPF0229 protein CKR_0568 (403 aa).

The segment at 71 to 109 is disordered; it reads SSGVGSGDGSQKKGDRIGKAIKDRDGKGNQGAGNQEGED. Basic and acidic residues predominate over residues 80–97; it reads SQKKGDRIGKAIKDRDGK.

It belongs to the UPF0229 family.

This Clostridium kluyveri (strain NBRC 12016) protein is UPF0229 protein CKR_0568.